Here is a 595-residue protein sequence, read N- to C-terminus: Beta-(1--&gt;2)glucan export ATP-binding/permease protein NdvA (595 aa).

In terms of domain architecture, ABC transmembrane type-1 spans 21–301 (SLLICAANVM…MSNFINLTVS (281 aa)). 5 helical membrane-spanning segments follow: residues 22-42 (LLICAANVMLAIITIAEPILF), 55-75 (IILTLTIWVCFGISHIIAYVL), 128-148 (AIWLDFMRQHLSTLVALFILI), 152-172 (FNMNWRLSIVLVVLAIIYVLI), and 248-268 (TASTISIVCVLLLGAFFVAKG). The ABC transporter domain occupies 335–569 (VQFHHVTYKF…GGRFYKLLKA (235 aa)). 368–375 (GPTGAGKT) contacts ATP.

Belongs to the ABC transporter superfamily. Beta-(1--&gt;2)glucan exporter (TC 3.A.1.108.1) family. As to quaternary structure, homodimer.

It localises to the cell inner membrane. The catalysed reaction is [(1-&gt;2)-beta-D-glucosyl](n)(in) + ATP + H2O = [(1-&gt;2)-beta-D-glucosyl](n)(out) + ADP + phosphate + H(+). Its function is as follows. Involved in beta-(1--&gt;2)glucan export. Transmembrane domains (TMD) form a pore in the inner membrane and the ATP-binding domain (NBD) is responsible for energy generation. This Bartonella quintana (strain Toulouse) (Rochalimaea quintana) protein is Beta-(1--&gt;2)glucan export ATP-binding/permease protein NdvA.